The sequence spans 153 residues: Ribosome maturation factor RimP (153 aa).

It belongs to the RimP family.

The protein resides in the cytoplasm. Functionally, required for maturation of 30S ribosomal subunits. The chain is Ribosome maturation factor RimP from Coxiella burnetii (strain CbuK_Q154) (Coxiella burnetii (strain Q154)).